We begin with the raw amino-acid sequence, 675 residues long: PML-RARA-regulated adapter molecule 1 (675 aa).

Residues 1-19 (MGSNQDFRNLQAKFQTSQP) are compositionally biased toward polar residues. Disordered stretches follow at residues 1-473 (MGSN…GPIN) and 523-562 (TDDS…PQQL). Over residues 23 to 35 (ELFRKTPKPELNK) the composition is skewed to basic and acidic residues. The segment covering 43-58 (TELSEQPKKSSQSELS) has biased composition (polar residues). Basic and acidic residues predominate over residues 141 to 150 (PKPEFGELSK). Composition is skewed to polar residues over residues 224 to 242 (RKSQ…SPSK), 251 to 264 (HSPQ…PKNN), and 322 to 331 (LQPSDLTRAS). Ser374 bears the Phosphoserine mark. Residues 407–422 (SECSLPSASAGSSPQC) show a composition bias toward polar residues. The span at 462 to 471 (PAKPALPPGP) shows a compositional bias: pro residues. Polar residues predominate over residues 537-546 (LSTQQATRWP). Residues 578–656 (KAEREFRKKF…PRTALLPLET (79 aa)) form the SH3 domain.

As to quaternary structure, interacts with SKAP2, LCP2 and DBNL. May interact with LYN. Interacts with NEK6. May be phosphorylated on tyrosines. As to expression, expressed in bone marrow and mature neutrophils. Weakly expressed in macrophages and mast cells.

Functionally, may be involved in integrin signaling in neutrophils. Binds to PtdIns(4)P. The sequence is that of PML-RARA-regulated adapter molecule 1 (Pram1) from Mus musculus (Mouse).